A 102-amino-acid chain; its full sequence is Putative pterin-4-alpha-carbinolamine dehydratase (102 aa).

The protein belongs to the pterin-4-alpha-carbinolamine dehydratase family.

The catalysed reaction is (4aS,6R)-4a-hydroxy-L-erythro-5,6,7,8-tetrahydrobiopterin = (6R)-L-erythro-6,7-dihydrobiopterin + H2O. The polypeptide is Putative pterin-4-alpha-carbinolamine dehydratase (Burkholderia ambifaria (strain MC40-6)).